The sequence spans 136 residues: Probable disulfide formation protein (136 aa).

A helical membrane pass occupies residues 7–26 (NNALYFAWLICSTGTVMSIY). Cys36 and Cys39 are disulfide-bonded. Helical transmembrane passes span 41–60 (YQRI…TYRE) and 67–84 (YALP…YQIC). An intrachain disulfide couples Cys96 to Cys101. Residues 109-133 (GFITVPMASALAFCAISCLLILSGS) traverse the membrane as a helical segment.

This sequence belongs to the DsbB family. BdbC subfamily.

It is found in the cell inner membrane. Its function is as follows. Required for disulfide bond formation in some proteins. The protein is Probable disulfide formation protein of Chlamydia caviae (strain ATCC VR-813 / DSM 19441 / 03DC25 / GPIC) (Chlamydophila caviae).